The following is a 43-amino-acid chain: Snaclec lebecetin subunit beta (43 aa).

Residues Ala-1–Val-43 enclose the C-type lectin domain. Cys-4 and Cys-16 are joined by a disulfide.

Heterodimer of subunits alpha and beta; disulfide-linked. Ca(2+) serves as cofactor. Post-translationally, glycosylated. As to expression, expressed by the venom gland.

It is found in the secreted. Functionally, binds to the platelet GPIb/IX/V receptor system and inhibits ristocetin-induced platelet aggregation in human platelet-rich plasma. Strongly inhibits platelet aggregation induced by ADP, calcium ionophore, thrombin and collagen. Does not inhibit U46619-induced platelet aggregation. The protein is Snaclec lebecetin subunit beta of Macrovipera lebetinus (Levantine viper).